A 272-amino-acid chain; its full sequence is MQLRITSRKKLTSLLCALGLISIVAIYPRQTVNFFYSTAVQITDYIHFYGYRPVKSFAIRIPASYTIHGIDVSRWQERIDWQRVAKMRDNGIRLQFAFIKATEGEKLVDPYFSRNWQLSRENGLLRGAYHYFSPSVSASVQARLFLQTVDFSQGDFPAVLDVEERGKLSAKELRKRVSQWLKMVEKSTGKKPIIYSGAVFYHTNLAGYFNEYPWWVAHYYQRRPDNDGMAWRFWQHSDRGQVDGINGPVDFNVFNGTVEELQAFVDGIKETP.

Catalysis depends on residues Asp-71 and Glu-163.

It belongs to the glycosyl hydrolase 25 family.

This is an uncharacterized protein from Escherichia coli (strain K12).